The following is a 7839-amino-acid chain: Nonribosomal peptide synthetase GRA1 (7839 aa).

The span at 1 to 23 shows a compositional bias: polar residues; it reads MALLNGKSTLPNGHNSSIESPNG. A disordered region spans residues 1 to 26; the sequence is MALLNGKSTLPNGHNSSIESPNGYTE. Residues 264–650 form an adenylation 1 region; it reads LASPNSCAVH…LGRIDDQVKI (387 aa). Residues 793 to 866 enclose the Carrier 1 domain; that stretch reads SAEALVLRQL…LQAEMSEKKK (74 aa). S827 is modified (O-(pantetheine 4'-phosphoryl)serine). Residues 916–1332 form a condensation 1 region; the sequence is DIYPASPLQE…ILSPSDVAQI (417 aa). The segment at 1351 to 1742 is adenylation 2; that stretch reads FFTQVKRSPD…QRKDAQLKIR (392 aa). The region spanning 1880-1957 is the Carrier 2 domain; the sequence is ELETEAERTM…AMSRQATVSD (78 aa). S1918 carries the O-(pantetheine 4'-phosphoryl)serine modification. The interval 1997 to 2413 is condensation 2; sequence DLYPCTPFQE…LISPSDMETI (417 aa). Residues 2432-2828 are adenylation 3; sequence FDRRLSQKHS…GRRDTQLKIR (397 aa). Residues 2963–3040 form the Carrier 3 domain; it reads IPTTQMEWNL…DLAQAIVLDT (78 aa). Residue S3001 is modified to O-(pantetheine 4'-phosphoryl)serine. Residues 3084 to 3496 form a condensation 3 region; that stretch reads DIYPCTPLQD…QVDLISDSDH (413 aa). An adenylation 4 region spans residues 3520–3923; sequence RLAVSNPDAE…GRRDSQVKLR (404 aa). The 78-residue stretch at 4057–4134 folds into the Carrier 4 domain; sequence RPLTEREKDL…DMAAMTTSLS (78 aa). S4095 bears the O-(pantetheine 4'-phosphoryl)serine mark. The tract at residues 4234 to 4569 is condensation 4; sequence NLEEFVGRQS…MMNPDDAEEI (336 aa). The interval 4591–4982 is adenylation 5; sequence HSKGCPDRIA…VSRKDTQVKF (392 aa). A Carrier 5 domain is found at 5113-5189; it reads ALSSDEESQL…DMALCMTSAQ (77 aa). S5150 is modified (O-(pantetheine 4'-phosphoryl)serine). The condensation 5 stretch occupies residues 5224-5653; that stretch reads EDIYPCSALQ…VSPSDQAEIL (430 aa). The tract at residues 5671–6069 is adenylation 6; the sequence is FESRARLQPS…GRRDTQVKLR (399 aa). The Carrier 6 domain maps to 6207–6282; the sequence is FPSSLAEQQM…HMAAIATTFT (76 aa). S6243 carries the O-(pantetheine 4'-phosphoryl)serine modification. The interval 6321-6730 is condensation 6; the sequence is QDIYPCSALQ…RLADMDLTGP (410 aa). The interval 6756–7147 is adenylation 7; the sequence is EQRVKSQPDS…LGRKDSQIKL (392 aa). In terms of domain architecture, Carrier 7 spans 7290–7366; it reads KAATPNEKTL…DLARVSRQSI (77 aa). An O-(pantetheine 4'-phosphoryl)serine modification is found at S7327. A condensation7 region spans residues 7404-7704; that stretch reads HDIYPCTQVQ…LDYAKKRASS (301 aa).

The protein belongs to the NRP synthetase family.

It functions in the pathway mycotoxin biosynthesis. Its function is as follows. Nonribosomal peptide synthetase; part of the gene cluster that mediates the biosynthesis of gramillins A and B, bicyclic lipopeptides that induce cell death in maize leaves but not in wheat leaves. The nonribosomal peptide synthetase GRA1 incorporates respectively a glutamic adic (Glu), a leucine (Leu), a serine (Ser), a hydroxyglutamine (HOGln), a 2-amino decanoic acid, and 2 cysteins (CysB and CysA). The biosynthesis of 2-amino decanoic acid incorporated in gramillins could be initiated by a fatty acid synthase composed of the alpha and beta subunits FGSG_00036 and FGSG_11656. The cytochrome P450 monooxygenase FGSG_15680 could hydroxylate the fatty acid chain. Subsequent oxidation to the ketone by the oxidoreductase FGSG_00048 and transamination by aminotransferase FGSG_00049 could form 2-amino-decanoic acid. On the other hand, FGSG_15680 could also be responsible for the HO-modified glutamine at the gamma-position. Whether hydroxylation occurs on the fully assembled product or on the Gln residue prior to assembly into the gramillins requires further proof. The thioredoxin FGSG_00043 could also be required for the disulfide-bond formation between CysA and CysB. The specific involvement of the remaining proteins from the cluster is more difficult to discern, but could have broader regulatory (FGSG_00040 and FGSG_11657) or enzymatic functions (FGSG_00044 and FGSG_00045). The final C-domain of GRA1 does not possess the expected sequence of a termination CT domain, often implicated in macrocyclization and release of a cyclopeptidein fungal NRPs; and the thioesterase FGSG_00047 may act in concert with the terminal C-domain of GRA1 to catalyze the formation of the macrocyclic anhydride and release of the products. This chain is Nonribosomal peptide synthetase GRA1, found in Gibberella zeae (strain ATCC MYA-4620 / CBS 123657 / FGSC 9075 / NRRL 31084 / PH-1) (Wheat head blight fungus).